The sequence spans 130 residues: Large ribosomal subunit protein bL19 (130 aa).

It belongs to the bacterial ribosomal protein bL19 family.

Its function is as follows. This protein is located at the 30S-50S ribosomal subunit interface and may play a role in the structure and function of the aminoacyl-tRNA binding site. The chain is Large ribosomal subunit protein bL19 from Cupriavidus metallidurans (strain ATCC 43123 / DSM 2839 / NBRC 102507 / CH34) (Ralstonia metallidurans).